Consider the following 117-residue polypeptide: Transcription elongation factor SPT4-B (117 aa).

The segment at 1–40 (MALETVPKDLRHLRACLLCSLVKTIDQFEYDGCDNCDAYL) is interaction with SUPT5H. The C4-type zinc-finger motif lies at 16-36 (CLLCSLVKTIDQFEYDGCDNC).

This sequence belongs to the SPT4 family. Interacts with SUPT5H to form DSIF. DSIF interacts with the positive transcription elongation factor b complex (P-TEFb complex), which is composed of CDK9 and cyclin-T (CCNT1 or CCNT2). DSIF interacts with RNA polymerase II, and this interaction is reduced by phosphorylation of the C-terminal domain (CTD) of POLR2A by P-TEFb. DSIF also interacts with the NELF complex, which is composed of WHSC2/NELFA, COBRA1/NELFB, TH1L/NELFD and RDBP/NELFE, and this interaction occurs following prior binding of DSIF to RNA polymerase II. DSIF also interacts with HRMT1L2/PRMT1, HTATSF1/TATSF1, RNGTT/CAP1A, SKB1/PRMT5, SUPT6H, and can interact with PIN1. Post-translationally, ubiquitinated by Ubr5 when not assembled in the DSIF complex, leading to its degradation: Ubr5 recognizes and binds a degron that is not accessible when Supt4h1b is part of the DSIF complex. Expressed in brain, heart and liver.

The protein localises to the nucleus. Its function is as follows. Component of the DRB sensitivity-inducing factor complex (DSIF complex), which regulates mRNA processing and transcription elongation by RNA polymerase II. DSIF positively regulates mRNA capping by stimulating the mRNA guanylyltransferase activity of RNGTT/CAP1A. DSIF also acts cooperatively with the negative elongation factor complex (NELF complex) to enhance transcriptional pausing at sites proximal to the promoter. Transcriptional pausing may facilitate the assembly of an elongation competent RNA polymerase II complex. DSIF and NELF promote pausing by inhibition of the transcription elongation factor TFIIS/S-II. TFIIS/S-II binds to RNA polymerase II at transcription pause sites and stimulates the weak intrinsic nuclease activity of the enzyme. Cleavage of blocked transcripts by RNA polymerase II promotes the resumption of transcription from the new 3' terminus and may allow repeated attempts at transcription through natural pause sites. This is Transcription elongation factor SPT4-B (Supt4h1b) from Mus musculus (Mouse).